The following is a 210-amino-acid chain: Probable GTP-binding protein EngB (210 aa).

The 175-residue stretch at 25–199 folds into the EngB-type G domain; the sequence is TGIEVAFAGR…RQKLDTWFNE (175 aa). GTP contacts are provided by residues 33–40, 60–64, 78–81, 145–148, and 178–180; these read GRSNAGKS, GRTQL, DLPG, TKAD, and FSS. Residues Ser-40 and Thr-62 each contribute to the Mg(2+) site.

It belongs to the TRAFAC class TrmE-Era-EngA-EngB-Septin-like GTPase superfamily. EngB GTPase family. Mg(2+) serves as cofactor.

Functionally, necessary for normal cell division and for the maintenance of normal septation. This chain is Probable GTP-binding protein EngB, found in Escherichia coli O157:H7.